The sequence spans 375 residues: MSPTLQLACDLISRASVTPEDAGCQALMTERLRAIGFHIESLRFDDVDNFWAVRGASGPILCFAGHTDVVPEGDPAKWQSPPYEPTITDGLLYGRGAADMKGSLAAMVTACEAFVAEHPNHTGRIAFLITSDEEGIAANGTVKVVEWLEARGEKVTWCLVGEPSSTQSVGDVIKNGRRGSLGCKLTVKGKQGHVAYPHLAKNPIHLVAPALADLAAEQWDEGNDFFPATSFQVSNFNAGTGATNVIPGEAAIVFNFRFSTESTADELKQRTEAILAKHGLDYDIHWHLSGEPFLTPAGALVDAAVTAIRAECGAEPELSTSGGTSDGRFIAPTGAQVLELGPVNATIHQINECVNVADLDKLSATYQRILKELLA.

His66 is a binding site for Zn(2+). Asp68 is a catalytic residue. Residue Asp99 coordinates Zn(2+). Glu133 serves as the catalytic Proton acceptor. Glu134, Glu162, and His348 together coordinate Zn(2+).

It belongs to the peptidase M20A family. DapE subfamily. In terms of assembly, homodimer. Requires Zn(2+) as cofactor. The cofactor is Co(2+).

The enzyme catalyses N-succinyl-(2S,6S)-2,6-diaminopimelate + H2O = (2S,6S)-2,6-diaminopimelate + succinate. It functions in the pathway amino-acid biosynthesis; L-lysine biosynthesis via DAP pathway; LL-2,6-diaminopimelate from (S)-tetrahydrodipicolinate (succinylase route): step 3/3. Catalyzes the hydrolysis of N-succinyl-L,L-diaminopimelic acid (SDAP), forming succinate and LL-2,6-diaminopimelate (DAP), an intermediate involved in the bacterial biosynthesis of lysine and meso-diaminopimelic acid, an essential component of bacterial cell walls. In Teredinibacter turnerae (strain ATCC 39867 / T7901), this protein is Succinyl-diaminopimelate desuccinylase.